A 48-amino-acid polypeptide reads, in one-letter code: Delta-ctenitoxin-Pn1b (48 aa).

5 cysteine pairs are disulfide-bonded: cysteine 1–cysteine 15, cysteine 8–cysteine 21, cysteine 12–cysteine 48, cysteine 14–cysteine 31, and cysteine 23–cysteine 29.

The protein belongs to the neurotoxin 03 (Tx2) family. 05 subfamily. Expressed by the venom gland.

It localises to the secreted. Insecticidal neurotoxin that reversibly inhibits the N-methyl-D-aspartate (NMDA)-subtype of ionotropic glutamate receptor (GRIN) and inhibits inactivation of insect sodium channels (Nav). Inhibits glutamate uptake in rat brain synaptosomes. In vivo, induces immediate excitatory effects when injected intrathoracically in houseflies and cockroaches. This chain is Delta-ctenitoxin-Pn1b, found in Phoneutria nigriventer (Brazilian armed spider).